The sequence spans 245 residues: Lytic switch protein BZLF1 (245 aa).

Positions 1-167 are transactivation; sequence MMDPNSTSED…RTRKPLQPES (167 aa). A phosphothreonine mark is found at Thr-14 and Thr-159. The tract at residues 145–167 is disordered; the sequence is GAPQPAPAAAPARRTRKPLQPES. The short motif at 157–194 is the Bipartite nuclear localization signal element; it reads RRTRKPLQPESLEECDSELEIKRYKNRVASRKCRAKFK. 3 positions are modified to phosphoserine: Ser-167, Ser-173, and Ser-186. The interval 178-195 is basic motif; the sequence is KRYKNRVASRKCRAKFKH. Positions 178–228 constitute a bZIP domain; that stretch reads KRYKNRVASRKCRAKFKHLLQHYREVASAKSSENDRLRLLLKQMCPSLDVD. A leucine-zipper region spans residues 196–228; that stretch reads LLQHYREVASAKSSENDRLRLLLKQMCPSLDVD. The tract at residues 229-245 is accessory activation domain; the sequence is SIIPRTPDVLHEDLLNF.

This sequence belongs to the bZIP family. In terms of assembly, homodimer. Interacts (via b-ZIP domain) with the DNA polymerase processivity factor BMRF1 (via N-terminus); this interaction may inhibit BZLF1-induced transcription of the BMRF1 promoter. Interacts with human UBN1, CRTC2 and RACK1. Interacts (via N-terminus) with human PAX5 (via N-terminus); this interaction inhibits BZLF1-mediated lytic viral reactivation. Interacts (via leucine-zipper domain) with host CEBPA; this interaction induces G1 host cell cycle arrest. Interacts (via C-terminus) with host TP53BP1 (via C-terminus); this interaction is involved in the activation of the viral lytic cycle. Interacts with host chromatin-remodeling ATPase INO80; this interaction participates to the activation of early lytic viral genes by BZLF1. Interacts with host regulator of chromatin SMARCA5/hSNF2H; this interaction participates to the activation of early lytic viral genes by BZLF1. Interacts with host PLSCR1/Phospholipid scramblase 1; this interaction negatively regulates the transcriptional regulatory activity of BZLF1 by preventing the formation of the BZLF1-CBP complex.

It localises to the host nucleus. Its function is as follows. Transcription factor that acts as a molecular switch to induce the transition from the latent to the lytic or productive phase of the virus cycle. Mediates the switch from the latent to the lytic cycle of infection in cells containing a highly methylated viral genome. Probably binds to silenced chromatin and recruits host chromatin-remodeling enzymes. Regulates this switch by binding to 2 types of ZEBRA response elements (ZREs): the CpG-free AP-1 like elements (latency) and the methylated CpG-containing elements (lytic replication). Activates preferentially the methylated forms of the viral lytic R (BRLF1) and Na (BRRF1) gene promoters, the latters being the first genes activated during Z-mediated reactivation in latently infected cells. BZLF1 and BRLF1 act together to trigger lytic replication. Also binds the lytic origin of replication, oriLyt. Induces G1 cell cycle arrest by stabilizing the host CCAAT/enhancer binding protein CEBPA. This function is important because the lytic cycle preferentially takes place in host cells arrested in G1. This Homo sapiens (Human) protein is Lytic switch protein BZLF1.